The chain runs to 496 residues: Galactokinase (496 aa).

N-acetylalanine is present on Ala-2. The alpha-D-galactose site is built by Arg-56, Glu-62, His-63, and Asp-65. Residues Gly-161, Gly-163, Ser-165, and Ser-166 each coordinate ATP. Asp-210 provides a ligand contact to alpha-D-galactose. Asp-210 functions as the Proton acceptor in the catalytic mechanism. Positions 252, 253, and 254 each coordinate ATP. Tyr-262 lines the alpha-D-galactose pocket.

It belongs to the GHMP kinase family. GalK subfamily. Mg(2+) serves as cofactor. Mn(2+) is required as a cofactor. The cofactor is Ca(2+). Expressed in roots, stems, leaves, flowers and young siliques. Higher expression in the elongating middle stem region than in the lower or upper stem region.

It catalyses the reaction alpha-D-galactose + ATP = alpha-D-galactose 1-phosphate + ADP + H(+). Its pathway is carbohydrate metabolism; galactose metabolism. Sugar-1-kinase with a very high substrate specificity for the alpha-anomeric configuration of D-galacose (D-Gal). Also efficiently converts 2-deoxy-D-Gal to 2-deoxy-D-al-1-phosphate. In Arabidopsis thaliana (Mouse-ear cress), this protein is Galactokinase (GAL1).